We begin with the raw amino-acid sequence, 132 residues long: Small ribosomal subunit protein uS11 (132 aa).

Over residues Met-1–Arg-16 the composition is skewed to basic residues. A disordered region spans residues Met-1–Glu-20.

It belongs to the universal ribosomal protein uS11 family. Part of the 30S ribosomal subunit. Interacts with proteins S7 and S18. Binds to IF-3.

In terms of biological role, located on the platform of the 30S subunit, it bridges several disparate RNA helices of the 16S rRNA. Forms part of the Shine-Dalgarno cleft in the 70S ribosome. The sequence is that of Small ribosomal subunit protein uS11 from Clostridium botulinum (strain Loch Maree / Type A3).